Here is a 257-residue protein sequence, read N- to C-terminus: Indole-3-glycerol phosphate synthase (257 aa).

This sequence belongs to the TrpC family.

It carries out the reaction 1-(2-carboxyphenylamino)-1-deoxy-D-ribulose 5-phosphate + H(+) = (1S,2R)-1-C-(indol-3-yl)glycerol 3-phosphate + CO2 + H2O. It functions in the pathway amino-acid biosynthesis; L-tryptophan biosynthesis; L-tryptophan from chorismate: step 4/5. This Halalkalibacterium halodurans (strain ATCC BAA-125 / DSM 18197 / FERM 7344 / JCM 9153 / C-125) (Bacillus halodurans) protein is Indole-3-glycerol phosphate synthase.